Here is an 89-residue protein sequence, read N- to C-terminus: Small ribosomal subunit protein uS15 (89 aa).

The protein belongs to the universal ribosomal protein uS15 family. Part of the 30S ribosomal subunit. Forms a bridge to the 50S subunit in the 70S ribosome, contacting the 23S rRNA.

Its function is as follows. One of the primary rRNA binding proteins, it binds directly to 16S rRNA where it helps nucleate assembly of the platform of the 30S subunit by binding and bridging several RNA helices of the 16S rRNA. Forms an intersubunit bridge (bridge B4) with the 23S rRNA of the 50S subunit in the ribosome. The chain is Small ribosomal subunit protein uS15 from Mycolicibacterium vanbaalenii (strain DSM 7251 / JCM 13017 / BCRC 16820 / KCTC 9966 / NRRL B-24157 / PYR-1) (Mycobacterium vanbaalenii).